Reading from the N-terminus, the 329-residue chain is 36 kDa antigen (329 aa).

Residues 11–31 (AILTGGGALLLGLIVLFYLAY) form a helical membrane-spanning segment.

The protein belongs to the membrane fusion protein (MFP) (TC 8.A.1) family.

The protein resides in the membrane. This chain is 36 kDa antigen, found in Helicobacter pylori (strain J99 / ATCC 700824) (Campylobacter pylori J99).